Reading from the N-terminus, the 921-residue chain is Respiratory burst oxidase homolog protein D (921 aa).

Residues Met-1–Gly-71 are disordered. Over Met-1–Arg-376 the chain is Cytoplasmic. Residues Ser-8, Ser-9, Ser-26, and Ser-39 each carry the phosphoserine modification. Residues Asn-21–Ile-31 show a composition bias toward polar residues. Residues Arg-44–Ala-53 are compositionally biased toward basic residues. EF-hand-like stretches follow at residues Ser-193–Ala-203 and Asn-230–Gln-241. 2 consecutive EF-hand domains span residues Ser-253–Ala-288 and Gln-297–Gln-332. 5 residues coordinate Ca(2+): Asp-266, Asp-268, Asp-270, Arg-272, and Glu-277. Phosphoserine is present on residues Ser-339, Ser-343, and Ser-347. A helical transmembrane segment spans residues Leu-377–Gln-397. The Extracellular segment spans residues Tyr-398–Val-461. Residues Lys-415 to Ile-572 enclose the Ferric oxidoreductase domain. Residues Ile-462–Phe-482 traverse the membrane as a helical segment. Over Pro-483 to Gly-516 the chain is Cytoplasmic. The helical transmembrane segment at Trp-517–Phe-537 threads the bilayer. Residues Arg-538–Tyr-559 are Extracellular-facing. The helical transmembrane segment at Thr-560 to Leu-580 threads the bilayer. Residues Thr-581–Thr-588 are Cytoplasmic-facing. The chain crosses the membrane as a helical span at residues Thr-589–Leu-606. The Extracellular segment spans residues Arg-607–Lys-734. In terms of domain architecture, FAD-binding FR-type spans Ser-611–Asp-732. A helical membrane pass occupies residues Lys-735–Leu-755. Residues Lys-756–Phe-921 are Cytoplasmic-facing.

This sequence belongs to the RBOH (TC 5.B.1.3) family. As to quaternary structure, monomer and homodimer. Interacts with BIK1 and FLS2. Interacts with PBL13. Binds to SIK1 upon flagellin perception and becomes activated by phosphorylation. Post-translationally, phosphorylated at Ser-39, Ser-343 and Ser-347 by BIK1 upon flagellin (flg22) treatment. Activated by phosphorylation at Ser-347 mediated by SIK1 and at Ser-8, Ser-9 and Ser-339 upon flagellin (e.g. flg22) perception. As to expression, more abundant in roots than in leaves, stems or inflorescences. Expressed in mesophyll and guard cells.

Its subcellular location is the membrane. With respect to regulation, inhibited by diphenylene iodinium (DPI). Its function is as follows. Calcium-dependent NADPH oxidase that generates superoxide. Involved in the generation of reactive oxygen species (ROS) during incompatible interactions with pathogens, in response to pathogen-associated molecular pattern (PAMP)-triggered immunity (PTI) signaling and in UV-B and abscisic acid ROS-dependent signaling and via SIK1 mediated activation by phosphorylation. Might be required for ROS signal amplification during light stress. This is Respiratory burst oxidase homolog protein D from Arabidopsis thaliana (Mouse-ear cress).